The following is a 285-amino-acid chain: Nucleotide-binding protein Geob_2284 (285 aa).

Residue 8 to 15 coordinates ATP; that stretch reads GLSGSGKS. 59-62 serves as a coordination point for GTP; sequence DIRG.

Belongs to the RapZ-like family.

Its function is as follows. Displays ATPase and GTPase activities. The sequence is that of Nucleotide-binding protein Geob_2284 from Geotalea daltonii (strain DSM 22248 / JCM 15807 / FRC-32) (Geobacter daltonii).